Here is a 411-residue protein sequence, read N- to C-terminus: Dipeptidase 1 (411 aa).

Residues 1–16 (MWSGWWLWPLVAVCTA) form the signal peptide. Zn(2+) contacts are provided by His-36 and Asp-38. Asn-57 carries N-linked (GlcNAc...) asparagine glycosylation. Residues Cys-87 and Cys-170 are joined by a disulfide bond. Residue Glu-141 coordinates Zn(2+). Position 168 (His-168) interacts with substrate. His-214 and His-235 together coordinate Zn(2+). Cys-242 and Cys-274 are joined by a disulfide. Position 246 (Arg-246) interacts with substrate. N-linked (GlcNAc...) asparagine glycosylation occurs at Asn-279. Asp-304 contributes to the substrate binding site. N-linked (GlcNAc...) asparagine glycosylation is found at Asn-332 and Asn-358. A lipid anchor (GPI-anchor amidated serine) is attached at Ser-385. Residues 386–411 (GASSLHRHWGLLLASLAPLVLCLSLL) constitute a propeptide, removed in mature form.

Belongs to the metallo-dependent hydrolases superfamily. Peptidase M19 family. As to quaternary structure, homodimer; disulfide-linked. Zn(2+) serves as cofactor. As to expression, expressed in lung and kidneys.

Its subcellular location is the apical cell membrane. It is found in the cell projection. It localises to the microvillus membrane. The enzyme catalyses an L-aminoacyl-L-amino acid + H2O = 2 an L-alpha-amino acid. It catalyses the reaction leukotriene D4 + H2O = leukotriene E4 + glycine. The catalysed reaction is a beta-lactam + H2O = a substituted beta-amino acid. It carries out the reaction L-cystine-bis-glycine + 2 H2O = L-cystine + 2 glycine. The enzyme catalyses glycyldehydrophenylalanine + H2O = 2,3-didehydrophenylalanine + glycine. Its activity is regulated as follows. Inhibited by L-penicillamine. Beta-lactamase activity is inhibited by cilastatin. Functionally, hydrolyzes a wide range of dipeptides including the conversion of leukotriene D4 to leukotriene E4. Hydrolyzes cystinyl-bis-glycine (cys-bis-gly) formed during glutathione degradation. Also possesses beta lactamase activity and can hydrolyze the beta-lactam antibiotic imipenem. Independently of its dipeptidase activity, acts as an adhesion receptor for neutrophil recruitment from bloodstream into inflamed lungs and liver. This is Dipeptidase 1 (DPEP1) from Homo sapiens (Human).